Here is a 392-residue protein sequence, read N- to C-terminus: Probable tRNA sulfurtransferase (392 aa).

The 108-residue stretch at 59 to 166 (SCYREALKRV…DEGLFIYTTE (108 aa)) folds into the THUMP domain. ATP contacts are provided by residues 186–187 (LL), 211–212 (YF), arginine 269, glycine 290, and glutamine 299.

The protein belongs to the ThiI family.

It is found in the cytoplasm. The catalysed reaction is [ThiI sulfur-carrier protein]-S-sulfanyl-L-cysteine + a uridine in tRNA + 2 reduced [2Fe-2S]-[ferredoxin] + ATP + H(+) = [ThiI sulfur-carrier protein]-L-cysteine + a 4-thiouridine in tRNA + 2 oxidized [2Fe-2S]-[ferredoxin] + AMP + diphosphate. It catalyses the reaction [ThiS sulfur-carrier protein]-C-terminal Gly-Gly-AMP + S-sulfanyl-L-cysteinyl-[cysteine desulfurase] + AH2 = [ThiS sulfur-carrier protein]-C-terminal-Gly-aminoethanethioate + L-cysteinyl-[cysteine desulfurase] + A + AMP + 2 H(+). The protein operates within cofactor biosynthesis; thiamine diphosphate biosynthesis. Functionally, catalyzes the ATP-dependent transfer of a sulfur to tRNA to produce 4-thiouridine in position 8 of tRNAs, which functions as a near-UV photosensor. Also catalyzes the transfer of sulfur to the sulfur carrier protein ThiS, forming ThiS-thiocarboxylate. This is a step in the synthesis of thiazole, in the thiamine biosynthesis pathway. The sulfur is donated as persulfide by IscS. The sequence is that of Probable tRNA sulfurtransferase from Coxiella burnetii (strain RSA 493 / Nine Mile phase I).